We begin with the raw amino-acid sequence, 476 residues long: Siroheme synthase (476 aa).

The segment at 1-207 (MTANALFPLF…QRHAEAEAVL (207 aa)) is precorrin-2 dehydrogenase /sirohydrochlorin ferrochelatase. Residues 25 to 26 (KV) and 46 to 47 (PS) contribute to the NAD(+) site. The residue at position 132 (Ser-132) is a Phosphoserine. A uroporphyrinogen-III C-methyltransferase region spans residues 220 to 476 (GSVTLVGAGA…SAPCPPARIL (257 aa)). Residue Asp-252 is the Proton acceptor of the active site. Catalysis depends on Lys-274, which acts as the Proton donor. Residues 305–307 (GGD), Val-310, 335–336 (TA), Met-387, and Gly-416 contribute to the S-adenosyl-L-methionine site.

It in the N-terminal section; belongs to the precorrin-2 dehydrogenase / sirohydrochlorin ferrochelatase family. The protein in the C-terminal section; belongs to the precorrin methyltransferase family.

It catalyses the reaction uroporphyrinogen III + 2 S-adenosyl-L-methionine = precorrin-2 + 2 S-adenosyl-L-homocysteine + H(+). It carries out the reaction precorrin-2 + NAD(+) = sirohydrochlorin + NADH + 2 H(+). The catalysed reaction is siroheme + 2 H(+) = sirohydrochlorin + Fe(2+). Its pathway is cofactor biosynthesis; adenosylcobalamin biosynthesis; precorrin-2 from uroporphyrinogen III: step 1/1. It participates in cofactor biosynthesis; adenosylcobalamin biosynthesis; sirohydrochlorin from precorrin-2: step 1/1. It functions in the pathway porphyrin-containing compound metabolism; siroheme biosynthesis; precorrin-2 from uroporphyrinogen III: step 1/1. The protein operates within porphyrin-containing compound metabolism; siroheme biosynthesis; siroheme from sirohydrochlorin: step 1/1. Its pathway is porphyrin-containing compound metabolism; siroheme biosynthesis; sirohydrochlorin from precorrin-2: step 1/1. Multifunctional enzyme that catalyzes the SAM-dependent methylations of uroporphyrinogen III at position C-2 and C-7 to form precorrin-2 via precorrin-1. Then it catalyzes the NAD-dependent ring dehydrogenation of precorrin-2 to yield sirohydrochlorin. Finally, it catalyzes the ferrochelation of sirohydrochlorin to yield siroheme. The polypeptide is Siroheme synthase (Xylella fastidiosa (strain M12)).